A 230-amino-acid chain; its full sequence is Ribonuclease 3 (230 aa).

The 123-residue stretch at 5-127 (HEHLARKLGI…ILGAVLRDQG (123 aa)) folds into the RNase III domain. Position 40 (E40) interacts with Mg(2+). Residue D44 is part of the active site. Positions 113 and 116 each coordinate Mg(2+). E116 is a catalytic residue. The region spanning 154–224 (DPKTRLQELM…AENMLSRLSD (71 aa)) is the DRBM domain. The interval 202 to 230 (GEGSSRKKAEQQAAENMLSRLSDQSRFRV) is disordered.

The protein belongs to the ribonuclease III family. Homodimer. Mg(2+) serves as cofactor.

Its subcellular location is the cytoplasm. The enzyme catalyses Endonucleolytic cleavage to 5'-phosphomonoester.. Functionally, digests double-stranded RNA. Involved in the processing of primary rRNA transcript to yield the immediate precursors to the large and small rRNAs (23S and 16S). Processes some mRNAs, and tRNAs when they are encoded in the rRNA operon. Processes pre-crRNA and tracrRNA of type II CRISPR loci if present in the organism. The sequence is that of Ribonuclease 3 from Methylococcus capsulatus (strain ATCC 33009 / NCIMB 11132 / Bath).